Reading from the N-terminus, the 356-residue chain is Glutamine synthetase cytosolic isozyme 2 (356 aa).

The GS beta-grasp domain maps to 19–99 (IIAEYIWIGG…VMCDTYTPAG (81 aa)). The region spanning 106–356 (KRHNAAKIFS…IAESTILWKP (251 aa)) is the GS catalytic domain.

The protein belongs to the glutamine synthetase family. Homooctamer.

The protein localises to the cytoplasm. It catalyses the reaction L-glutamate + NH4(+) + ATP = L-glutamine + ADP + phosphate + H(+). In Vitis vinifera (Grape), this protein is Glutamine synthetase cytosolic isozyme 2 (GS1-2).